Reading from the N-terminus, the 225-residue chain is Protein-disulfide oxidoreductase DsbI (225 aa).

Residues 27 to 47 (FLWLLMAIAMGGLIILAHSFF) form a helical membrane-spanning segment. Cys56 and Cys59 are disulfide-bonded. 2 helical membrane passes run 65 to 85 (AMFV…NIVL) and 87 to 107 (LIGC…SIKL). Cys128 and Cys154 are oxidised to a cystine. The chain crosses the membrane as a helical span at residues 199 to 219 (CMLAFGLCLILLLVMSGAWAL).

This sequence belongs to the DsbB family. DsbI subfamily. In terms of assembly, interacts with DsbL.

It localises to the cell inner membrane. Its function is as follows. Required for disulfide bond formation in some proteins. Part of a redox system composed of DsbI and DsbL that mediates formation of an essential disulfide bond in AssT. In Salmonella choleraesuis (strain SC-B67), this protein is Protein-disulfide oxidoreductase DsbI.